Consider the following 416-residue polypeptide: Serine/threonine-protein phosphatase PP2A-like PPG1 (416 aa).

Mn(2+) contacts are provided by Asp-62, His-64, Asp-90, and Asn-122. His-123 acts as the Proton donor in catalysis. 2 residues coordinate Mn(2+): His-173 and His-248. The tract at residues 363–391 (EDTLQGKSVNGINFDDELSTSDDTSGSGG) is disordered.

It belongs to the PPP phosphatase family. PP-2A subfamily. Mn(2+) is required as a cofactor.

The catalysed reaction is O-phospho-L-seryl-[protein] + H2O = L-seryl-[protein] + phosphate. The enzyme catalyses O-phospho-L-threonyl-[protein] + H2O = L-threonyl-[protein] + phosphate. Its activity is regulated as follows. Inhibited by okadaic acid, a specific inhibitor of serine/threonine phosphatases of types 1, 2A and 2B. Serine/threonine-protein phosphatase that plays an important role in controlling colony morphology, filament extension and agar invasion. Down-regulates expression of NRG1 and affects the expression of multiple filament-specific transcripts in response to serum and 37 degrees Celsius. Plays a crucial role in virulence in a mouse model of systemic candidiasis. In Candida albicans (strain SC5314 / ATCC MYA-2876) (Yeast), this protein is Serine/threonine-protein phosphatase PP2A-like PPG1.